A 350-amino-acid chain; its full sequence is Probable poly-beta-1,6-N-acetyl-D-glucosamine export protein (350 aa).

The next 10 membrane-spanning stretches (helical) occupy residues 7-29 (ELVYLRAIICAIIIVTHLLTQIT), 44-66 (FYIRNIVIFGTPCFIILSQLLTT), 79-101 (TRVKYILIPYILMGLFYSYSESL), 116-138 (LLGQWYGYFIVVIMQFFILSYII), 145-167 (LFNSKILLLLSFILQQSFLYYFT), 187-204 (IIFGWIFYFFLGAYMGYN), 211-233 (FLERYLVIMIVLAVATYFVFIAL), 243-262 (SFSYSLTPYNSIMFIVILGI), 269-291 (MLFNTIQMISAFSFFIYLLHPII), and 306-328 (TMVFLAISLLFILGLCIGVGMIL).

The protein belongs to the acyltransferase 3 family.

The protein localises to the cell membrane. Its function is as follows. Presumably involved in the export of the biofilm adhesin polysaccharide poly-beta-1,6-N-acetyl-D-glucosamine (PNAG, also referred to as PIA) across the cell membrane. The sequence is that of Probable poly-beta-1,6-N-acetyl-D-glucosamine export protein (icaC) from Staphylococcus aureus (strain MRSA252).